Reading from the N-terminus, the 334-residue chain is Geranylgeranyl pyrophosphate synthase ltmG (334 aa).

Positions 53, 56, and 85 each coordinate isopentenyl diphosphate. Positions 92 and 96 each coordinate Mg(2+). Dimethylallyl diphosphate is bound at residue R101. Isopentenyl diphosphate is bound at residue R102. Dimethylallyl diphosphate-binding residues include K179, T180, and Q213. D216 is a Mg(2+) binding site. Residues N220, K230, and K240 each coordinate dimethylallyl diphosphate.

It belongs to the FPP/GGPP synthase family. It depends on Mg(2+) as a cofactor.

It catalyses the reaction isopentenyl diphosphate + dimethylallyl diphosphate = (2E)-geranyl diphosphate + diphosphate. The catalysed reaction is isopentenyl diphosphate + (2E)-geranyl diphosphate = (2E,6E)-farnesyl diphosphate + diphosphate. The enzyme catalyses isopentenyl diphosphate + (2E,6E)-farnesyl diphosphate = (2E,6E,10E)-geranylgeranyl diphosphate + diphosphate. Its pathway is secondary metabolite biosynthesis. Geranylgeranyl pyrophosphate synthase; part of the gene cluster that mediates the biosynthesis of lolitrems, indole-diterpene mycotoxins that are potent tremorgens in mammals, and are synthesized by clavicipitaceous fungal endophytes in association with their grass hosts. The geranylgeranyl diphosphate (GGPP) synthase ltmG is proposed to catalyze the first step in lolitrem biosynthesis. LtmG catalyzes a series of iterative condensations of isopentenyl diphosphate (IPP) with dimethylallyl diphosphate (DMAPP), geranyl diphosphate (GPP), and farnesyl diphosphate (FPP), to form GGPP. GGPP then condenses with indole-3-glycerol phosphate to form 3-geranylgeranylindole, an acyclic intermediate, to be incorporated into paxilline. Either ltmG or ltmC could be responsible for this step, as both are putative prenyl transferases. The FAD-dependent monooxygenase ltmM then catalyzes the epoxidation of the two terminal alkenes of the geranylgeranyl moiety, which is subsequently cyclized by ltmB, to paspaline. The cytochrome P450 monooxygenases ltmQ and ltmP can sequentially oxidize paspaline to terpendole E and terpendole F. Alternatively, ltmP converts paspaline to an intermediate which is oxidized by ltmQ to terpendole F. LtmF, ltmK, ltmE and ltmJ appear to be unique to the epichloe endophytes. The prenyltransferase ltmF is involved in the 27-hydroxyl-O-prenylation. The cytochrome P450 monooxygenase ltmK is required for the oxidative acetal ring formation. The multi-functional prenyltransferase ltmE is required for C20- and C21-prenylations of the indole ring of paspalanes and acts together with the cytochrome P450 monooxygenase ltmJ to yield lolitremanes by multiple oxidations and ring closures. The stereoisomer pairs of lolitriol and lolitrem N or lolitrem B and lolitrem F may be attributed to variations in the way in which ring closure can occur under the action of ltmJ. While the major product of this pathway is lolitrem B, the prenyl transferases and cytochrome P450 monooxygenases identified in this pathway have a remarkable versatility in their regio- and stereo-specificities to generate a diverse range of metabolites that are products of a metabolic grid rather than a linear pathway. The polypeptide is Geranylgeranyl pyrophosphate synthase ltmG (Epichloe festucae (strain Fl1)).